Consider the following 72-residue polypeptide: Translation initiation factor IF-1 (72 aa).

One can recognise an S1-like domain in the interval 1-72 (MAKQSAIEKD…SKGRIAFRYK (72 aa)).

It belongs to the IF-1 family. In terms of assembly, component of the 30S ribosomal translation pre-initiation complex which assembles on the 30S ribosome in the order IF-2 and IF-3, IF-1 and N-formylmethionyl-tRNA(fMet); mRNA recruitment can occur at any time during PIC assembly.

Its subcellular location is the cytoplasm. One of the essential components for the initiation of protein synthesis. Stabilizes the binding of IF-2 and IF-3 on the 30S subunit to which N-formylmethionyl-tRNA(fMet) subsequently binds. Helps modulate mRNA selection, yielding the 30S pre-initiation complex (PIC). Upon addition of the 50S ribosomal subunit IF-1, IF-2 and IF-3 are released leaving the mature 70S translation initiation complex. The protein is Translation initiation factor IF-1 of Parabacteroides distasonis (strain ATCC 8503 / DSM 20701 / CIP 104284 / JCM 5825 / NCTC 11152).